The sequence spans 248 residues: Pyridoxine 5'-phosphate synthase (248 aa).

Residue N12 participates in 3-amino-2-oxopropyl phosphate binding. 14–15 (DH) contributes to the 1-deoxy-D-xylulose 5-phosphate binding site. Residue R23 participates in 3-amino-2-oxopropyl phosphate binding. H48 (proton acceptor) is an active-site residue. R50 and H55 together coordinate 1-deoxy-D-xylulose 5-phosphate. The active-site Proton acceptor is E75. T105 provides a ligand contact to 1-deoxy-D-xylulose 5-phosphate. Residue H196 is the Proton donor of the active site. 3-amino-2-oxopropyl phosphate contacts are provided by residues G197 and 218 to 219 (GH).

This sequence belongs to the PNP synthase family. In terms of assembly, homooctamer; tetramer of dimers.

It localises to the cytoplasm. It catalyses the reaction 3-amino-2-oxopropyl phosphate + 1-deoxy-D-xylulose 5-phosphate = pyridoxine 5'-phosphate + phosphate + 2 H2O + H(+). It functions in the pathway cofactor biosynthesis; pyridoxine 5'-phosphate biosynthesis; pyridoxine 5'-phosphate from D-erythrose 4-phosphate: step 5/5. Functionally, catalyzes the complicated ring closure reaction between the two acyclic compounds 1-deoxy-D-xylulose-5-phosphate (DXP) and 3-amino-2-oxopropyl phosphate (1-amino-acetone-3-phosphate or AAP) to form pyridoxine 5'-phosphate (PNP) and inorganic phosphate. This Pseudomonas aeruginosa (strain UCBPP-PA14) protein is Pyridoxine 5'-phosphate synthase.